A 118-amino-acid polypeptide reads, in one-letter code: Transcriptional regulator WhiB4 (118 aa).

The 4Fe-4S Wbl-type domain occupies 36–92; that stretch reads LCRTTDPDELFVRGAAQRKAAVICRHCPVMQECAADALDNKVEFGVWGGMTERQRRA. 4 residues coordinate [4Fe-4S] cluster: cysteine 37, cysteine 59, cysteine 62, and cysteine 68. 2 cysteine pairs are disulfide-bonded: cysteine 37-cysteine 68 and cysteine 59-cysteine 62.

It belongs to the WhiB family. It depends on [4Fe-4S] cluster as a cofactor. Post-translationally, the Fe-S cluster can be nitrosylated by nitric oxide (NO). In terms of processing, upon Fe-S cluster removal intramolecular disulfide bonds are formed.

It is found in the cytoplasm. Its function is as follows. Acts as a transcriptional regulator. Probably redox-responsive. The apo- but not holo-form probably binds DNA. The polypeptide is Transcriptional regulator WhiB4 (whiB4) (Mycobacterium tuberculosis (strain CDC 1551 / Oshkosh)).